A 746-amino-acid polypeptide reads, in one-letter code: Serine/threonine-protein kinase SMU1 (746 aa).

2 disordered regions span residues 1–138 and 155–212; these read MSLV…DTLH and QRSH…GSRN. Composition is skewed to low complexity over residues 15 to 54 and 85 to 105; these read SSANRAASSLAFQPASTSNSASPTSSSTSTFANGSSSSTT and SVSSLSNNPPAASPITAPSSA. 3 stretches are compositionally biased toward polar residues: residues 106–121, 128–138, and 156–176; these read LPWSSQNPAASGSTAT, RSNTAGPDTLH, and RSHSSIAAHQASPSLNQSSPT. A compositionally biased stretch (basic and acidic residues) spans 194–203; sequence PSRDRERSRD. The region spanning 237 to 250 is the CRIB domain; sequence ISTPYDPVHLTHVG. Residues 301–451 form a disordered region; sequence GGSDVWKKMG…RRETKKSTIK (151 aa). The span at 370 to 380 shows a compositional bias: polar residues; sequence PPSNASTSSAD. Residues 414–430 are compositionally biased toward low complexity; sequence SPASRAPDAPAAVSAAS. In terms of domain architecture, Protein kinase spans 472–723; that stretch reads YRSLQKIGQG…ALGMLAHPFL (252 aa). ATP-binding positions include 478–486 and lysine 501; that span reads IGQGASGGV. Catalysis depends on aspartate 591, which acts as the Proton acceptor.

This sequence belongs to the protein kinase superfamily. STE Ser/Thr protein kinase family. STE20 subfamily.

It localises to the cytoplasm. It is found in the nucleus. It catalyses the reaction L-seryl-[protein] + ATP = O-phospho-L-seryl-[protein] + ADP + H(+). It carries out the reaction L-threonyl-[protein] + ATP = O-phospho-L-threonyl-[protein] + ADP + H(+). In terms of biological role, MAP4K component of the MAPK pathway required for the mating pheromone response and the regulation of cell polarity and cell cycle. Phosphorylates histone H2B to form H2BS10ph. The sequence is that of Serine/threonine-protein kinase SMU1 (SMU1) from Mycosarcoma maydis (Corn smut fungus).